A 120-amino-acid polypeptide reads, in one-letter code: Large ribosomal subunit protein bL20 (120 aa).

Belongs to the bacterial ribosomal protein bL20 family.

In terms of biological role, binds directly to 23S ribosomal RNA and is necessary for the in vitro assembly process of the 50S ribosomal subunit. It is not involved in the protein synthesizing functions of that subunit. This chain is Large ribosomal subunit protein bL20, found in Cereibacter sphaeroides (strain ATCC 17025 / ATH 2.4.3) (Rhodobacter sphaeroides).